The chain runs to 302 residues: tRNA pseudouridine synthase B (302 aa).

The active-site Nucleophile is Asp-47.

The protein belongs to the pseudouridine synthase TruB family. Type 1 subfamily.

It catalyses the reaction uridine(55) in tRNA = pseudouridine(55) in tRNA. Responsible for synthesis of pseudouridine from uracil-55 in the psi GC loop of transfer RNAs. This Methylobacillus flagellatus (strain ATCC 51484 / DSM 6875 / VKM B-1610 / KT) protein is tRNA pseudouridine synthase B.